The primary structure comprises 183 residues: Translation initiation factor IF-3 (183 aa).

Belongs to the IF-3 family. As to quaternary structure, monomer.

The protein resides in the cytoplasm. IF-3 binds to the 30S ribosomal subunit and shifts the equilibrium between 70S ribosomes and their 50S and 30S subunits in favor of the free subunits, thus enhancing the availability of 30S subunits on which protein synthesis initiation begins. The sequence is that of Translation initiation factor IF-3 from Azobacteroides pseudotrichonymphae genomovar. CFP2.